A 333-amino-acid polypeptide reads, in one-letter code: MTLLFDKTGPIDSPTLAPASVDNHCRSPDRSAAARVIEIGLVNNMSDAALRATERQFMRLLRAGSGEHLVRLHCFALPSVQRSPATRQRIDSLYADIADLRHTRLDALIVTGAEPRAATLQSEPYWDEMRALVDWAEANTRSTIWSCLAAHAAVLHLDGIERERLPQKCSGVFAGEQVNDDALLSDLPSPLKVPHSRLNDLAADRLAARGYEVLTHAPNAGVDIFARQGRSRFVFFQGHPEYDATSLQREYLRDIGRFLTGERHDYPEFPVDYFDADIEDALDAFRAEAEAARDPAIIARLPHLALRQGTAEGIETTANALFRNWLISLASEP.

The active-site Acyl-thioester intermediate is the Cys-147. Lys-168 and Ser-196 together coordinate substrate. His-239 acts as the Proton acceptor in catalysis. Glu-241 is an active-site residue. Arg-253 lines the substrate pocket.

This sequence belongs to the MetA family.

The protein localises to the cytoplasm. The catalysed reaction is L-homoserine + succinyl-CoA = O-succinyl-L-homoserine + CoA. It participates in amino-acid biosynthesis; L-methionine biosynthesis via de novo pathway; O-succinyl-L-homoserine from L-homoserine: step 1/1. In terms of biological role, transfers a succinyl group from succinyl-CoA to L-homoserine, forming succinyl-L-homoserine. The chain is Homoserine O-succinyltransferase from Rhodopseudomonas palustris.